A 498-amino-acid chain; its full sequence is L-xylulose/3-keto-L-gulonate kinase (498 aa).

This sequence belongs to the FGGY kinase family. In terms of assembly, homodimer.

The enzyme catalyses L-xylulose + ATP = L-xylulose 5-phosphate + ADP + H(+). It carries out the reaction 3-dehydro-L-gulonate + ATP = 3-dehydro-L-gulonate 6-phosphate + ADP + H(+). Catalyzes the phosphorylation of L-xylulose and 3-keto-L-gulonate. Is involved in L-lyxose utilization via xylulose, and may also be involved in the utilization of 2,3-diketo-L-gulonate. This chain is L-xylulose/3-keto-L-gulonate kinase (lyx), found in Escherichia coli (strain K12).